Reading from the N-terminus, the 141-residue chain is Protein Turandot Z (141 aa).

The signal sequence occupies residues 1 to 23; that stretch reads MYFAIRLSFVLAVLFCLTGNGNA.

The protein belongs to the Turandot family.

It localises to the secreted. Its function is as follows. A humoral factor that may play a role in stress tolerance. This chain is Protein Turandot Z, found in Drosophila yakuba (Fruit fly).